The sequence spans 258 residues: Acyl-[acyl-carrier-protein]--UDP-N-acetylglucosamine O-acyltransferase (258 aa).

The protein belongs to the transferase hexapeptide repeat family. LpxA subfamily. In terms of assembly, homotrimer.

The protein localises to the cytoplasm. It carries out the reaction a (3R)-hydroxyacyl-[ACP] + UDP-N-acetyl-alpha-D-glucosamine = a UDP-3-O-[(3R)-3-hydroxyacyl]-N-acetyl-alpha-D-glucosamine + holo-[ACP]. It functions in the pathway glycolipid biosynthesis; lipid IV(A) biosynthesis; lipid IV(A) from (3R)-3-hydroxytetradecanoyl-[acyl-carrier-protein] and UDP-N-acetyl-alpha-D-glucosamine: step 1/6. Functionally, involved in the biosynthesis of lipid A, a phosphorylated glycolipid that anchors the lipopolysaccharide to the outer membrane of the cell. This Saccharophagus degradans (strain 2-40 / ATCC 43961 / DSM 17024) protein is Acyl-[acyl-carrier-protein]--UDP-N-acetylglucosamine O-acyltransferase.